The chain runs to 432 residues: Pachytene checkpoint protein 2 homolog (432 aa).

Methionine 1 is modified (N-acetylmethionine). Residue 179–186 (GPPGTGKT) coordinates ATP.

Belongs to the AAA ATPase family. PCH2 subfamily. As to quaternary structure, specifically interacts with the ligand binding domain of the thyroid receptor (TR). This interaction does not require the presence of thyroid hormone for its interaction. Interacts with proteasome subunit PSMA8; to participate in meiosis progression during spermatogenesis.

In terms of biological role, plays a key role in chromosome recombination and chromosome structure development during meiosis. Required at early steps in meiotic recombination that leads to non-crossovers pathways. Also needed for efficient completion of homologous synapsis by influencing crossover distribution along the chromosomes affecting both crossovers and non-crossovers pathways. Also required for development of higher-order chromosome structures and is needed for synaptonemal-complex formation. In males, required for efficient synapsis of the sex chromosomes and for sex body formation. Promotes early steps of the DNA double-strand breaks (DSBs) repair process upstream of the assembly of RAD51 complexes. Required for depletion of HORMAD1 and HORMAD2 from synapsed chromosomes. This Canis lupus familiaris (Dog) protein is Pachytene checkpoint protein 2 homolog (TRIP13).